A 29-amino-acid chain; its full sequence is MDIVSLAWAALMVVFTFSLSLVVWGRSGL.

The chain crosses the membrane as a helical span at residues 3-23 (IVSLAWAALMVVFTFSLSLVV).

Belongs to the PetN family. As to quaternary structure, the 4 large subunits of the cytochrome b6-f complex are cytochrome b6, subunit IV (17 kDa polypeptide, PetD), cytochrome f and the Rieske protein, while the 4 small subunits are PetG, PetL, PetM and PetN. The complex functions as a dimer.

Its subcellular location is the plastid. The protein localises to the chloroplast thylakoid membrane. Its function is as follows. Component of the cytochrome b6-f complex, which mediates electron transfer between photosystem II (PSII) and photosystem I (PSI), cyclic electron flow around PSI, and state transitions. This Solanum bulbocastanum (Wild potato) protein is Cytochrome b6-f complex subunit 8.